A 302-amino-acid polypeptide reads, in one-letter code: Phosphoribosylaminoimidazole-succinocarboxamide synthase (302 aa).

This sequence belongs to the SAICAR synthetase family.

It catalyses the reaction 5-amino-1-(5-phospho-D-ribosyl)imidazole-4-carboxylate + L-aspartate + ATP = (2S)-2-[5-amino-1-(5-phospho-beta-D-ribosyl)imidazole-4-carboxamido]succinate + ADP + phosphate + 2 H(+). It functions in the pathway purine metabolism; IMP biosynthesis via de novo pathway; 5-amino-1-(5-phospho-D-ribosyl)imidazole-4-carboxamide from 5-amino-1-(5-phospho-D-ribosyl)imidazole-4-carboxylate: step 1/2. The sequence is that of Phosphoribosylaminoimidazole-succinocarboxamide synthase from Cupriavidus necator (strain ATCC 17699 / DSM 428 / KCTC 22496 / NCIMB 10442 / H16 / Stanier 337) (Ralstonia eutropha).